The sequence spans 494 residues: Amidophosphoribosyltransferase (494 aa).

The propeptide occupies 1–10 (MSNYSGLNEE). Catalysis depends on Cys-11, which acts as the Nucleophile. Residues 11-231 (CGVFGIWNHP…AGEYVVITDE (221 aa)) form the Glutamine amidotransferase type-2 domain. Residues Ser-294, Asp-356, and Asp-357 each contribute to the Mg(2+) site.

This sequence in the C-terminal section; belongs to the purine/pyrimidine phosphoribosyltransferase family. Mg(2+) is required as a cofactor.

The catalysed reaction is 5-phospho-beta-D-ribosylamine + L-glutamate + diphosphate = 5-phospho-alpha-D-ribose 1-diphosphate + L-glutamine + H2O. It participates in purine metabolism; IMP biosynthesis via de novo pathway; N(1)-(5-phospho-D-ribosyl)glycinamide from 5-phospho-alpha-D-ribose 1-diphosphate: step 1/2. Catalyzes the formation of phosphoribosylamine from phosphoribosylpyrophosphate (PRPP) and glutamine. This chain is Amidophosphoribosyltransferase, found in Staphylococcus epidermidis (strain ATCC 35984 / DSM 28319 / BCRC 17069 / CCUG 31568 / BM 3577 / RP62A).